Reading from the N-terminus, the 213-residue chain is High frequency lysogenization protein HflD homolog (213 aa).

Positions 79-126 (QGLNAELTRYTLSLMVLERKLSSAKGALDTLGNRINGLQRQLEHFDLQ) form a coiled coil.

It belongs to the HflD family.

It localises to the cytoplasm. The protein localises to the cell inner membrane. The chain is High frequency lysogenization protein HflD homolog from Shigella flexneri serotype 5b (strain 8401).